The following is a 324-amino-acid chain: MTSTGSTRYDGDSWDLASSVGVTATMVAAARAMATRAENPLINDPYAEPLVRAVGVDLLTRLATGEFNVADLDDDPQRPLGPIGDVADNMAVRTRFFDDFFLAATRAGLEQVVILASGRDARAYRLPWPPQTVVYEIDLPQVIDFKSRTLADLGAAPTADRRVVAVDLREDWPAALRAAGFDPNQPTAWSAEGLLGYLPPEAQDRLLDTVTELSAPGSRLAAECLSGVDPAEEEQIKERMQEVSARWRAHGFDVDMVGLVYFGDRNEAVPYLSDRGWLLTSTPLPELRAANGLAPAAVDDDGPSVDMLYVSGTLYTTPRPDPAP.

S-adenosyl-L-methionine-binding positions include Asp138 and 167–168 (DL).

This sequence belongs to the UPF0677 family.

In terms of biological role, exhibits S-adenosyl-L-methionine-dependent methyltransferase activity. The polypeptide is Putative S-adenosyl-L-methionine-dependent methyltransferase MUL_0818 (Mycobacterium ulcerans (strain Agy99)).